Here is a 146-residue protein sequence, read N- to C-terminus: MNKQVIEVLNKQVADWSVLFTKLHNFHWYVKGPQFFTLHEKFEELYTESATHIDEIAERILAIGGKPVATMKEYLEISSIQEAAYGETAEGMVEAIMKDYEMMLVELKKGMEIAQNSDDEMTSDLLLGIYTELEKHAWMLRAFLNQ.

Residues His-27, Asp-54, and Glu-58 each coordinate Fe cation.

The protein belongs to the Dps family. In terms of assembly, the 12 subunits form a hollow sphere into which the mineral iron core of up to 500 Fe(3+) can be deposited. Homododecamer.

The protein resides in the cytoplasm. It catalyses the reaction 2 Fe(2+) + H2O2 + 2 H(+) = 2 Fe(3+) + 2 H2O. In terms of biological role, protects DNA from oxidative damage by sequestering intracellular Fe(2+) ion and storing it in the form of Fe(3+) oxyhydroxide mineral. One hydrogen peroxide oxidizes two Fe(2+) ions, which prevents hydroxyl radical production by the Fenton reaction. It is capable of binding and sequestering Fe(2+) ion. Does not bind DNA. This chain is DNA protection during starvation protein 2 (dps2), found in Bacillus anthracis.